The sequence spans 539 residues: Lysophospholipid acyltransferase LPEAT2 (539 aa).

The chain crosses the membrane as a helical span at residues 93 to 113 (LVICLPIALIRLVLFAASLAV). Positions 178–183 (HVSYIE) match the HXXXXD motif motif. EF-hand domains are found at residues 426–455 (KRIF…VLTQ), 457–492 (LFKQ…TIPN), and 493–528 (LNKD…NPLL). Residues Asp470, Asp472, Asp474, Tyr476, Glu481, Asp506, Asp508, Asp510, Arg512, and Asp517 each coordinate Ca(2+).

The protein belongs to the 1-acyl-sn-glycerol-3-phosphate acyltransferase family.

The protein resides in the golgi apparatus membrane. It is found in the late endosome membrane. The catalysed reaction is a 1-acyl-sn-glycero-3-phosphoethanolamine + an acyl-CoA = a 1,2-diacyl-sn-glycero-3-phosphoethanolamine + CoA. It catalyses the reaction a 1-acyl-sn-glycero-3-phosphocholine + an acyl-CoA = a 1,2-diacyl-sn-glycero-3-phosphocholine + CoA. The enzyme catalyses a 1-acyl-sn-glycero-3-phospho-L-serine + an acyl-CoA = a 1,2-diacyl-sn-glycero-3-phospho-L-serine + CoA. It functions in the pathway lipid metabolism; phospholipid metabolism. Functionally, possesses acyl-CoA-dependent lysophospholipid acyltransferase activity with a subset of lysophospholipids as substrates. Exhibits strong acylation activity on lysophosphatidylethanolamine (LPE), and lower activity on lysophosphatidylcholine (LPC) and lysophosphatidylserine (LPS). Exhibits acylation activity on both LPE and LPC. Has a preference for 18:1-LPE over 16:0-LPE as acceptor. Palmitoyl-CoA (16:0-CoA) is a better acyl donor than oleoyl-CoA (18:1-CoA). Among several different acyl-CoA species the best acyl donor is eicosanoyl-CoA (20:0-CoA). Activity is calcium-independent. Its activity is essential for maintaining adequate levels of phosphatidylethanolamine (PE), LPE and LPC in the cells, which is crucial for plant growth regulation. This Arabidopsis thaliana (Mouse-ear cress) protein is Lysophospholipid acyltransferase LPEAT2.